A 281-amino-acid polypeptide reads, in one-letter code: Mad-like protein 1 (281 aa).

The segment covering 71 to 80 has biased composition (low complexity); it reads SCASNASTSS. The tract at residues 71–105 is disordered; that stretch reads SCASNASTSSQPYCSSPPARKSSKHSRTAHNELEK. The tract at residues 95–108 is basic motif; sequence HSRTAHNELEKTRR. The region spanning 95-147 is the bHLH domain; that stretch reads HSRTAHNELEKTRRANLRGCLETLKMLVPCVSDATRNTTLALLTRARDHIIEL. Positions 109-147 are helix-loop-helix motif; the sequence is ANLRGCLETLKMLVPCVSDATRNTTLALLTRARDHIIEL. Residues 144–185 adopt a coiled-coil conformation; that stretch reads IIELQDSNAAQMKKLNDLRDEQDELVAELAQLQADEEVAQAT. The tract at residues 189–213 is disordered; sequence CQTLSQSRPESRASSFTSTSSRDSP. The segment covering 200 to 212 has biased composition (low complexity); that stretch reads RASSFTSTSSRDS.

In terms of assembly, forms heterodimer with mxl-1 in the presence and absence of DNA. Post-translationally, ubiquitinated. As to expression, expressed in intestinal cells in adults. Expressed in D-type motor neuron cell bodies.

It localises to the nucleus. In terms of biological role, transcriptional regulator which binds to the E box motif 5'-CACGTG-3', when in a heterodimeric complex with mxl-1. Involved in the control of lifespan in response to dietary restriction, the decline in protein homeostasis associated with normal aging, germline signaling and may overlap with the insulin-like signaling pathway. Plays a role in autophagy. Involved in promoting infection by the microsporidian pathogen N.parisii, possibly together with transcription factors pha-4 and zip-10. In response to neuronal injury, mdl-1 is targeted by sdz-33 for ubiquitin-mediated degradation, probably thereby reducing levels of mdl-1-mxl-1 heterodimers, allowing free mxl-1 to form complexes with tdpt-1 and thus inhibiting tdpt-1-dependent sumoylation of ets-4. This Caenorhabditis elegans protein is Mad-like protein 1.